A 1219-amino-acid chain; its full sequence is Cullin-associated NEDD8-dissociated protein 1 (1219 aa).

Position 2 is an N-acetylalanine (alanine 2). HEAT repeat units follow at residues 44 to 81, 83 to 119, 209 to 244, 248 to 288, 327 to 363, 367 to 404, 423 to 460, 464 to 503, 599 to 636, 639 to 676, 808 to 848, 850 to 883, 927 to 964, 966 to 998, 1002 to 1039, 1043 to 1079, 1101 to 1137, and 1141 to 1180; these read DLEV…KVGE, RIVE…QIAP, KATV…AVGY, THLG…RCPR, EEDD…SRSE, KVYQ…QTGN, QEVS…VLPD, DHIG…SHAP, AELP…LHIN, CVLD…AYGD, KNCS…RKDL, AHAG…IAVG, SSVE…IEPE, LVPA…ERPE, EIIF…YKPN, GLLP…DDGL, NPSS…KCPS, and AVLD…ALRA. A disordered region spans residues 311 to 340; the sequence is FTDNMEEDTDNETLEDEEDDESANEYTDDE. Over residues 314–340 the composition is skewed to acidic residues; the sequence is NMEEDTDNETLEDEEDDESANEYTDDE.

This sequence belongs to the CAND family. As to quaternary structure, interacts with CUL1 and CUL4. Binds unneddylated CUL1, but cannot bind CUL1 once it has been neddylated. Highly expressed in roots. Expressed in stems, flowers and siliques.

In terms of biological role, key assembly factor of SCF (SKP1-CUL1-F-box protein) E3 ubiquitin ligase complexes that promotes the exchange of the substrate-recognition F-box subunit in SCF complexes, thereby playing a key role in the cellular repertoire of SCF complexes. Acts as a F-box protein exchange factor. Required for SCF(TIR1) function. Modulates SCF(TIR1) function through its interactions with the CUL1 subunit. Represses photomorphogenesis by promoting HY5 degradation in darkness. The protein is Cullin-associated NEDD8-dissociated protein 1 (CAND1) of Arabidopsis thaliana (Mouse-ear cress).